Here is a 231-residue protein sequence, read N- to C-terminus: NADH-ubiquinone oxidoreductase chain 4 (231 aa).

Helical transmembrane passes span 1 to 21 (PIAGSMVLAAILLKLGGYGII), 34 to 54 (MFIPFIVLALWGAILANLTCL), 63 to 85 (IAYSSISHMGLVVATIIIQTPWG), 89 to 111 (AMALMIAHGFTSSALFCLANTTY), 128 to 148 (ILPMTTTWWLLANLMNIAMPP), and 169 to 189 (TIIMLGLSMLITASYSLHMFL).

Belongs to the complex I subunit 4 family.

It localises to the mitochondrion membrane. It catalyses the reaction a ubiquinone + NADH + 5 H(+)(in) = a ubiquinol + NAD(+) + 4 H(+)(out). Core subunit of the mitochondrial membrane respiratory chain NADH dehydrogenase (Complex I) that is believed to belong to the minimal assembly required for catalysis. Complex I functions in the transfer of electrons from NADH to the respiratory chain. The immediate electron acceptor for the enzyme is believed to be ubiquinone. The sequence is that of NADH-ubiquinone oxidoreductase chain 4 (MT-ND4) from Lachesis muta muta (Bushmaster).